Consider the following 757-residue polypeptide: LPS-assembly protein LptD (757 aa).

The signal sequence occupies residues 1 to 20 (MLQRFITSLMLLPFPGSALA).

Belongs to the LptD family. Component of the lipopolysaccharide transport and assembly complex. Interacts with LptE and LptA.

Its subcellular location is the cell outer membrane. In terms of biological role, together with LptE, is involved in the assembly of lipopolysaccharide (LPS) at the surface of the outer membrane. The protein is LPS-assembly protein LptD of Idiomarina loihiensis (strain ATCC BAA-735 / DSM 15497 / L2-TR).